Reading from the N-terminus, the 267-residue chain is Soluble interferon gamma receptor OPG193 (267 aa).

The N-terminal stretch at 1-17 is a signal peptide; it reads MRYIIILAVLFINSIHA. N-linked (GlcNAc...) asparagine; by host glycans are attached at residues asparagine 42 and asparagine 150.

It belongs to the type II cytokine receptor family. As to quaternary structure, homodimer. Interacts with host IFNG.

The protein resides in the secreted. Its function is as follows. Counteracts the antiviral effects of host IFN-gamma. Acts as a soluble IFN-gamma receptor and thus inhibits the interaction between host IFN-gamma and its receptor. The protein is Soluble interferon gamma receptor OPG193 (OPG193) of Cynomys gunnisoni (Gunnison's prairie dog).